Reading from the N-terminus, the 292-residue chain is MGRQKELMNRCGEMLHIRYRLLRQALAECLGTLILVMFGCGSVAQVVLSRGTHGGFLTINLAFGFAVTLAILVAGQVSGAHLNPAVTFAMCFLAREPWIKLPIYTLAQTLGAFLGAGIVFGLYYDAIWAFAGNELVVSGPNGTAGIFATYPSGHLDMVNGFFDQFIGTAALIVCVLAIVDPYNNPVPRGLEAFTVGLVVLVIGTSMGFNSGYAVNPARDFGPRLFTALAGWGSEVFTTGQNWWWVPIVSPLLGSIGGVFVYQLMIGCHLEQPPPSTEAENVKLAHMKHKEQI.

Over 1–24 (MGRQKELMNRCGEMLHIRYRLLRQ) the chain is Cytoplasmic. A helical membrane pass occupies residues 25–42 (ALAECLGTLILVMFGCGS). The Extracellular portion of the chain corresponds to 43–56 (VAQVVLSRGTHGGF). A helical membrane pass occupies residues 57-74 (LTINLAFGFAVTLAILVA). The Cytoplasmic portion of the chain corresponds to 75-78 (GQVS). Positions 79 to 92 (GAHLNPAVTFAMCF) form an intramembrane region, discontinuously helical. The NPA 1 signature appears at 83–85 (NPA). Residues 93-100 (LAREPWIK) lie on the Cytoplasmic side of the membrane. Residues 101-121 (LPIYTLAQTLGAFLGAGIVFG) form a helical membrane-spanning segment. At 122–159 (LYYDAIWAFAGNELVVSGPNGTAGIFATYPSGHLDMVN) the chain is on the extracellular side. Asn-141 carries N-linked (GlcNAc...) asparagine glycosylation. A helical membrane pass occupies residues 160-177 (GFFDQFIGTAALIVCVLA). Topologically, residues 178–189 (IVDPYNNPVPRG) are cytoplasmic. Residues 190–206 (LEAFTVGLVVLVIGTSM) form a helical membrane-spanning segment. The Extracellular segment spans residues 207 to 210 (GFNS). The discontinuously helical intramembrane region spans 211–224 (GYAVNPARDFGPRL). Residues 215-217 (NPA) carry the NPA 2 motif. Residues 225–242 (FTALAGWGSEVFTTGQNW) lie on the Extracellular side of the membrane. The chain crosses the membrane as a helical span at residues 243 to 264 (WWVPIVSPLLGSIGGVFVYQLM). Residues 265 to 292 (IGCHLEQPPPSTEAENVKLAHMKHKEQI) are Cytoplasmic-facing.

It belongs to the MIP/aquaporin (TC 1.A.8) family. As to quaternary structure, homotetramer; each monomer provides an independent glycerol/water pore. Could also exist in other oligomeric states. As to expression, detected in kidney medulla and papilla, in collecting duct cells. Detected in colon.

It localises to the cell membrane. Its subcellular location is the basolateral cell membrane. It carries out the reaction glycerol(in) = glycerol(out). The catalysed reaction is H2O(in) = H2O(out). The enzyme catalyses urea(in) = urea(out). It catalyses the reaction H2O2(out) = H2O2(in). With respect to regulation, channel activity is inhibited by mercury ions. Aquaglyceroporins form homotetrameric transmembrane channels, with each monomer independently mediating glycerol and water transport across the plasma membrane along their osmotic gradient. Could also be permeable to urea. Also participates in cell permeability to H2O2 and H2O2-mediated signaling. In skin, transports glycerol to the epidermis and stratum corneum, where it maintains hydration, elasticity, and supports lipid biosynthesis for barrier repair. In kidney, contributes to the reabsorption of water, helping the body maintain proper fluid balance. The sequence is that of Aquaporin-3 from Rattus norvegicus (Rat).